The primary structure comprises 953 residues: MTAAENVCYTLINVPMDSEPPSEISLKNDLEKGDVKSKTEALKKVIIMILNGEKLPGLLMTIIRFVLPLQDHTIKKLLLVFWEIVPKTTPDGRLLHEMILVCDAYRKDLQHPNEFIRGSTLRFLCKLKEAELLEPLMPAIRACLEHRHSYVRRNAVLAIYTIYRNFEHLIPDAPELIHDFLVNEKDASCKRNAFMMLIHADQDRALDYLSTCIDQVQTFGDILQLVIVELIYKVCHANPSERARFIRCIYNLLQSSSPAVKYEAAGTLVTLSSAPTAIKAAAQCYIDLIIKESDNNVKLIVLDRLIELKEHPAHERVLQDLVMDILRVLSTPDLEVRKKTLQLALDLVSSRNVEELVIVLKKEVIKTNNVSEHEDTDKYRQLLVRTLHSCSVRFPDMAANVIPVLMEFLSDNNEAAAADVLEFVREAIQRFDNLRMLIVEKMLEVFHAIKSVKIYRGALWILGEYCSTKEDIQSVMTEIRRSLGEIPIVESEIKKEAGELKPEEEITVGPVQKLVTEMGTYATQSALSSSRPTKKEEDRPPLRGFLLDGDFFVAASLATTLTKIALRYVALVQEKKKQNSFVAEAMLLMATILHLGKSSLPKKPITDDDVDRISLCLKVLSECSPLMNDIFNKECRQSLSHMLSAKLEEEKLSQKKESEKRNVTVQPDDPISFMQLTAKNEMNCKEDQFQLSLLAAMGNTQRKEAADPLASKLNKVTQLTGFSDPVYAEAYVHVNQYDIVLDVLVVNQTSDTLQNCTLELATLGDLKLVEKPSPLTLAPHDFANIKANVKVASTENGIIFGNIVYDVSGAASDRNCVVLSDIHIDIMDYIQPATCTDAEFRQMWAEFEWENKVTVNTNMVDLNDYLQHILKSTNMKCLTPEKALSGYCGFMAANLYARSIFGEDALANVSIEKPIHQGPDAAVTGHIRIRAKSQGMALSLGDKINLSQKKTSI.

T2 carries the post-translational modification N-acetylthreonine. HEAT repeat units lie at residues 96 to 131, 132 to 168, 240 to 276, 277 to 314, 316 to 353, and 396 to 433; these read HEMILVCDAYRKDLQHPNEFIRGSTLRFLCKLKEAE, LLEPLMPAIRACLEHRHSYVRRNAVLAIYTIYRNFEH, SERARFIRCIYNLLQSSSPAVKYEAAGTLVTLSSAPT, AIKAAAQCYIDLIIKESDNNVKLIVLDRLIELKEHPAH, RVLQDLVMDILRVLSTPDLEVRKKTLQLALDLVSSRNV, and DMAANVIPVLMEFLSDNNEAAAADVLEFVREAIQRFDN. K494 carries the post-translational modification N6-acetyllysine.

As to quaternary structure, oligomeric complex that consists of at least the alpha, beta, beta', gamma, delta, epsilon and zeta subunits. Interacts with SCYL1. Interacts with COPG1. Interacts (via trunk domain) with ARF1 (via switch I region); the interaction is direct. Interacts with KCNK2/TREK (via N-terminus); this interaction increases the channel-mediated whole cell currents and promotes plasma membrane expression of KCNK2/TREK. Interacts with anthrax lethal factor (LF); this interaction may facilitate endosomal vesicle membrane translocation of LF and its release from the lumen of endosomal vesicles to external milieu. Interacts with CAPN8 and PRKCE. Interacts with ARF1 (myristoylated); this interaction is required for binding of COPB1 to Golgi membranes. Interacts with STX17. Interacts with TMEM115. Interacts with HLA-G-B2M complex; this interaction mediates the endoplasmic reticulum (ER) retrieval of HLA-E-B2M complexes that bind low affinity peptides. Interacts with TMEM41B. (Microbial infection) Interacts (via C-terminus) with HIV-1 Nef; the interaction is direct. Post-translationally, proteolytically cleaved between Ser-528 and Ser-529 by CAPN8.

The protein resides in the cytoplasm. It is found in the golgi apparatus membrane. Its subcellular location is the cytoplasmic vesicle. It localises to the COPI-coated vesicle membrane. The protein localises to the cell membrane. The protein resides in the endoplasmic reticulum-Golgi intermediate compartment. Its function is as follows. The coatomer is a cytosolic protein complex that binds to dilysine motifs and reversibly associates with Golgi non-clathrin-coated vesicles, which further mediate biosynthetic protein transport from the ER, via the Golgi up to the trans Golgi network. Coatomer complex is required for budding from Golgi membranes, and is essential for the retrograde Golgi-to-ER transport of dilysine-tagged proteins. In mammals, the coatomer can only be recruited by membranes associated to ADP-ribosylation factors (ARFs), which are small GTP-binding proteins; the complex also influences the Golgi structural integrity, as well as the processing, activity, and endocytic recycling of LDL receptors. Plays a functional role in facilitating the transport of kappa-type opioid receptor mRNAs into axons and enhances translation of these proteins. Required for limiting lipid storage in lipid droplets. Involved in lipid homeostasis by regulating the presence of perilipin family members PLIN2 and PLIN3 at the lipid droplet surface and promoting the association of adipocyte surface triglyceride lipase (PNPLA2) with the lipid droplet to mediate lipolysis. Involved in the Golgi disassembly and reassembly processes during cell cycle. Involved in autophagy by playing a role in early endosome function. Plays a role in organellar compartmentalization of secretory compartments including endoplasmic reticulum (ER)-Golgi intermediate compartment (ERGIC), Golgi, trans-Golgi network (TGN) and recycling endosomes, and in biosynthetic transport of CAV1. Promotes degradation of Nef cellular targets CD4 and MHC class I antigens by facilitating their trafficking to degradative compartments. This is Coatomer subunit beta from Homo sapiens (Human).